Here is a 504-residue protein sequence, read N- to C-terminus: MVTELANLKSISKSFGGIHALRSVNFDVRPGEVHALLGENGAGKSTLMRVLGGEIIPSQGEVVINGKRTELRDPRDARALGIVVIHQELALAPDLSVAENIFLGELPTLISRFSLRRRAKQLIDRLGFDIDPGRLVGTLSVAHQQVVEIAKALSQDIKIIVFDEPTAVLGAQDAMKLHQIIRGLRDRGVGIVYISHRLDEVFDIADRMTVMKDGETVGTVATTDVKIDDIIRMMVGRPIANMFPERSQRTIGAELLNVKKLNAGRMVRDVSFSVRAGEIVGLGGLIGSGRTEVARAIFGADPLDSGTISLKGKALKLKSPRDAVKAGIGLVPEDRKEHGVVIDKPIRVNATMARMSSVVNALGFLKPALERTDVTALGKSLRLKASSIDAPVSSLSGGNQQKVVLAKWFHAGGDVIILDEPTRGVDVGAKAEIYALINKLAEDGKAVLVISSEHQELFGLCDRVLAMGQGQIRGELTPSNYSEENLLGLSMMGGARASNQGSQV.

ABC transporter domains are found at residues 6-238 (ANLK…VGRP) and 251-494 (IGAE…MMGG). 38-45 (GENGAGKS) lines the ATP pocket.

It belongs to the ABC transporter superfamily. Ribose importer (TC 3.A.1.2.1) family. In terms of assembly, the complex is composed of an ATP-binding protein (RbsA), two transmembrane proteins (RbsC) and a solute-binding protein (RbsB).

It is found in the cell inner membrane. The catalysed reaction is D-ribose(out) + ATP + H2O = D-ribose(in) + ADP + phosphate + H(+). Functionally, part of the ABC transporter complex RbsABC involved in ribose import. Responsible for energy coupling to the transport system. The protein is Ribose import ATP-binding protein RbsA 3 of Rhizobium meliloti (strain 1021) (Ensifer meliloti).